The primary structure comprises 367 residues: Pectate trisaccharide-lyase (367 aa).

A signal peptide spans 1 to 27; that stretch reads MLMRFSRVVSLVLLLVFTAVLTGAVKA. Ca(2+) contacts are provided by Asp144, Asp166, and Asp170. One copy of the PbH1 1 repeat lies at 151–173; the sequence is SHHIWIDHCTFVNGNDGAVDIKK. Arg224 is a catalytic residue. One copy of the PbH1 2 repeat lies at 263–289; that stretch reads GAKVHVEGNYFMGYGAVMAEAGIAFLP.

The protein belongs to the polysaccharide lyase 1 family. In terms of assembly, homotetramer. Ca(2+) serves as cofactor.

The protein resides in the secreted. It carries out the reaction eliminative cleavage of unsaturated trigalacturonate as the major product from the reducing end of polygalacturonic acid/pectate.. Its activity is regulated as follows. Completely inactivated by EGTA. Cleaves unsaturated trigalacturonate from pectin. Activity is highest towards polygalacturonic acid, activity on methylated pectins decreases with an increasing degree of methylation. The polypeptide is Pectate trisaccharide-lyase (Thermotoga maritima (strain ATCC 43589 / DSM 3109 / JCM 10099 / NBRC 100826 / MSB8)).